Consider the following 657-residue polypeptide: Tyramine beta-hydroxylase (657 aa).

A helical membrane pass occupies residues 77-97 (VALLFLLVAYCGGVVHAGEIV). One can recognise a DOMON domain in the interval 103–214 (TNVTVKWHTD…GTTQFYIAAS (112 aa)). 2 N-linked (GlcNAc...) asparagine glycosylation sites follow: N104 and N143. Y278 is a catalytic residue. 2 cysteine pairs are disulfide-bonded: C280/C330 and C319/C342. 2 residues coordinate Cu(2+): H312 and H313. Residues H380, H458, H460, and M533 each contribute to the Cu(2+) site. Disulfide bonds link C437-C549, C441-C606, and C512-C534. Residue H458 is part of the active site. N555 carries an N-linked (GlcNAc...) asparagine glycan.

The protein belongs to the copper type II ascorbate-dependent monooxygenase family. The cofactor is Cu(2+). In terms of tissue distribution, present in synaptic regions of RIC interneurons. Present in gonadal sheath cells of hermaphrodites (at protein level).

It localises to the membrane. The catalysed reaction is tyramine + L-ascorbate + O2 = (R)-octopamine + L-dehydroascorbate + H2O. Required for the conversion of tyramine to octopamine, a precursor of octapamine but probably itself a neurotransmitter. Involved in the regulation of egg laying, which is inhibited by tyramine. Due to its involvement in octopamine biosynthesis, also required for crtc-1-dependent regulation of AMPK-mediated longevity. This chain is Tyramine beta-hydroxylase, found in Caenorhabditis elegans.